The sequence spans 125 residues: Prepro-urotensin II-alpha (125 aa).

Positions 1 to 21 (MMCNLLLSFSVLLLSCTHLVA) are cleaved as a signal peptide. The propeptide occupies 109-111 (QFR). Residues cysteine 119 and cysteine 124 are joined by a disulfide bond.

This sequence belongs to the urotensin-2 family.

The protein resides in the secreted. Functionally, urotensin is found in the teleost caudal neurosecretory system. It has a suggested role in osmoregulation and as a corticotropin-releasing factor. The non-hormonal portion of this precursor may be a urotensin binding protein, urophysin. In Cyprinus carpio (Common carp), this protein is Prepro-urotensin II-alpha.